The chain runs to 130 residues: Arsenical-resistance protein 2 (130 aa).

A Rhodanese domain is found at 17–124; that stretch reads QRKDFQVVDL…WETHCRESNL (108 aa).

Involved in resistance to arsenic compounds. This is Arsenical-resistance protein 2 (ARR2) from Saccharomyces cerevisiae (strain ATCC 204508 / S288c) (Baker's yeast).